The chain runs to 350 residues: Transmembrane protein 185B (350 aa).

Helical transmembrane passes span L16–I36, W41–G61, F81–V101, F111–V131, W168–Y188, V211–L231, and T240–T260.

Belongs to the TMEM185 family.

The protein localises to the membrane. This is Transmembrane protein 185B (Tmem185b) from Mus musculus (Mouse).